The sequence spans 82 residues: MTDQIRTLQGRVVSDKMDKSITVAIERKVKHPMLGKIIVRTTKLHVHDENNECKTGDLVEIRECRPLSKTKCWTLVSVVEKA.

The protein belongs to the universal ribosomal protein uS17 family. In terms of assembly, part of the 30S ribosomal subunit.

One of the primary rRNA binding proteins, it binds specifically to the 5'-end of 16S ribosomal RNA. This is Small ribosomal subunit protein uS17 from Tolumonas auensis (strain DSM 9187 / NBRC 110442 / TA 4).